Here is a 72-residue protein sequence, read N- to C-terminus: Translation initiation factor IF-1 (72 aa).

Residues 1–72 (MAKEDSIEMQ…TKGRIVFRAR (72 aa)) enclose the S1-like domain.

This sequence belongs to the IF-1 family. In terms of assembly, component of the 30S ribosomal translation pre-initiation complex which assembles on the 30S ribosome in the order IF-2 and IF-3, IF-1 and N-formylmethionyl-tRNA(fMet); mRNA recruitment can occur at any time during PIC assembly.

It localises to the cytoplasm. Its function is as follows. One of the essential components for the initiation of protein synthesis. Stabilizes the binding of IF-2 and IF-3 on the 30S subunit to which N-formylmethionyl-tRNA(fMet) subsequently binds. Helps modulate mRNA selection, yielding the 30S pre-initiation complex (PIC). Upon addition of the 50S ribosomal subunit IF-1, IF-2 and IF-3 are released leaving the mature 70S translation initiation complex. This Idiomarina loihiensis (strain ATCC BAA-735 / DSM 15497 / L2-TR) protein is Translation initiation factor IF-1.